Consider the following 349-residue polypeptide: Protein O-mannose kinase (349 aa).

Residues 1–19 lie on the Cytoplasmic side of the membrane; that stretch reads MGQQHGARNGLTHRELPRG. A helical; Signal-anchor for type II membrane protein transmembrane segment spans residues 20–42; sequence MGLLLAMALMNVVLYVCLDHLFI. The Lumenal segment spans residues 43–349; that stretch reads SPGRATEDPR…TVMSQTKEML (307 aa). Asparagine 66, asparagine 164, and asparagine 219 each carry an N-linked (GlcNAc...) asparagine glycan. Residues 80-349 form the Protein kinase domain; the sequence is VRQLKLVGEG…TVMSQTKEML (270 aa).

This sequence belongs to the protein kinase superfamily. Ser/Thr protein kinase family. STKL subfamily.

The protein resides in the endoplasmic reticulum membrane. The enzyme catalyses 3-O-[beta-D-GalNAc-(1-&gt;3)-beta-D-GlcNAc-(1-&gt;4)-alpha-D-Man]-L-Thr-[protein] + ATP = 3-O-[beta-D-GalNAc-(1-&gt;3)-beta-D-GlcNAc-(1-&gt;4)-(O-6-P-alpha-D-Man)]-Thr-[protein] + ADP + H(+). Its function is as follows. Protein O-mannose kinase that specifically mediates phosphorylation at the 6-position of an O-mannose of the trisaccharide (N-acetylgalactosamine (GalNAc)-beta-1,3-N-acetylglucosamine (GlcNAc)-beta-1,4-mannose) to generate phosphorylated O-mannosyl trisaccharide (N-acetylgalactosamine-beta-1,3-N-acetylglucosamine-beta-1,4-(phosphate-6-)mannose). Phosphorylated O-mannosyl trisaccharide is a carbohydrate structure present in alpha-dystroglycan (DAG1), which is required for binding laminin G-like domain-containing extracellular proteins with high affinity. Only shows kinase activity when the GalNAc-beta-3-GlcNAc-beta-terminus is linked to the 4-position of O-mannose, suggesting that this disaccharide serves as the substrate recognition motif. The chain is Protein O-mannose kinase (Pomk) from Rattus norvegicus (Rat).